Consider the following 197-residue polypeptide: Glycerol-3-phosphate acyltransferase (197 aa).

4 consecutive transmembrane segments (helical) span residues 1 to 21, 69 to 89, 110 to 130, and 152 to 172; these read MTALILLLAYLLGSIPFGLLV, LPMLFSVPVHPLLAGAIAVVG, VMLFYSPLFFLSLIAVFLVVL, and VFFTDDIPLTVAVLLLASFIF.

The protein belongs to the PlsY family. Probably interacts with PlsX.

Its subcellular location is the cell membrane. The catalysed reaction is an acyl phosphate + sn-glycerol 3-phosphate = a 1-acyl-sn-glycero-3-phosphate + phosphate. It functions in the pathway lipid metabolism; phospholipid metabolism. Catalyzes the transfer of an acyl group from acyl-phosphate (acyl-PO(4)) to glycerol-3-phosphate (G3P) to form lysophosphatidic acid (LPA). This enzyme utilizes acyl-phosphate as fatty acyl donor, but not acyl-CoA or acyl-ACP. This chain is Glycerol-3-phosphate acyltransferase, found in Geobacillus kaustophilus (strain HTA426).